Reading from the N-terminus, the 218-residue chain is Small ribosomal subunit protein uS3c (218 aa).

Positions 43-118 (IKNYVQKNMK…KLNISITRIE (76 aa)) constitute a KH type-2 domain.

It belongs to the universal ribosomal protein uS3 family. As to quaternary structure, part of the 30S ribosomal subunit.

Its subcellular location is the plastid. The protein resides in the chloroplast. The protein is Small ribosomal subunit protein uS3c (rps3) of Populus alba (White poplar).